A 56-amino-acid polypeptide reads, in one-letter code: Small ribosomal subunit protein uS14 (56 aa).

Zn(2+) contacts are provided by Cys21, Cys24, Cys39, and Cys42.

Belongs to the universal ribosomal protein uS14 family. In terms of assembly, component of the 40S small ribosomal subunit. Zn(2+) is required as a cofactor.

The protein resides in the cytoplasm. It is found in the cytosol. The protein localises to the rough endoplasmic reticulum. This is Small ribosomal subunit protein uS14 (RpS29) from Culex quinquefasciatus (Southern house mosquito).